We begin with the raw amino-acid sequence, 55 residues long: Large ribosomal subunit protein bL33A (55 aa).

It belongs to the bacterial ribosomal protein bL33 family.

This chain is Large ribosomal subunit protein bL33A, found in Mycobacterium sp. (strain KMS).